Reading from the N-terminus, the 1022-residue chain is Antigenic heat-stable 120 kDa protein (1022 aa).

The segment at 1–33 (MSKNGNQDISEFDPLNREFTEAEKQQQMQQEQE) is disordered. A compositionally biased stretch (basic and acidic residues) spans 14–24 (PLNREFTEAEK).

It localises to the cytoplasm. This chain is Antigenic heat-stable 120 kDa protein (sca4), found in Rickettsia prowazekii (strain Madrid E).